A 324-amino-acid polypeptide reads, in one-letter code: tRNA dimethylallyltransferase (324 aa).

17 to 24 serves as a coordination point for ATP; that stretch reads GPTASGKT. A substrate-binding site is contributed by 19–24; the sequence is TASGKT. 3 interaction with substrate tRNA regions span residues 42-45, 166-170, and 251-256; these read DSAL, QRIQR, and RCVGYR.

It belongs to the IPP transferase family. Monomer. It depends on Mg(2+) as a cofactor.

It carries out the reaction adenosine(37) in tRNA + dimethylallyl diphosphate = N(6)-dimethylallyladenosine(37) in tRNA + diphosphate. Functionally, catalyzes the transfer of a dimethylallyl group onto the adenine at position 37 in tRNAs that read codons beginning with uridine, leading to the formation of N6-(dimethylallyl)adenosine (i(6)A). This is tRNA dimethylallyltransferase from Burkholderia pseudomallei (strain 668).